We begin with the raw amino-acid sequence, 444 residues long: MKQRFIRQFTNLMSTSRPKVVANKYFTSNTAKDVWSLTNEAAAKAANNSKNQGRELINLGQGFFSYSPPQFAIKEAQKALDIPMVNQYSPTRGRPSLINSLIKLYSPIYNTELKAENVTVTTGANEGILSCLMGLLNAGDEVIVFEPFFDQYIPNIELCGGKVVYVPINPPKELDQRNTRGEEWTIDFEQFEKAITSKTKAVIINTPHNPIGKVFTREELTTLGNICVKHNVVIISDEVYEHLYFTDSFTRIATLSPEIGQLTLTVGSAGKSFAATGWRIGWVLSLNAELLSYAAKAHTRICFASPSPLQEACANSINDALKIGYFEKMRQEYINKFKIFTSIFDELGLPYTAPEGTYFVLVDFSKVKIPEDYPYPEEILNKGKDFRISHWLINELGVVAIPPTEFYIKEHEKAAENLLRFAVCKDDAYLENAVERLKLLKDYL.

Position 271 is an N6-(pyridoxal phosphate)lysine (lysine 271).

The protein belongs to the class-I pyridoxal-phosphate-dependent aminotransferase family. As to quaternary structure, homodimer. Requires pyridoxal 5'-phosphate as cofactor.

The protein localises to the cytoplasm. Its subcellular location is the mitochondrion. The catalysed reaction is L-kynurenine + 2-oxoglutarate = kynurenate + L-glutamate + H2O. The protein operates within amino-acid degradation; L-kynurenine degradation; kynurenate from L-kynurenine: step 1/2. Functionally, catalyzes the irreversible transamination of the L-tryptophan metabolite L-kynurenine to form kynurenic acid (KA). The protein is Probable kynurenine--oxoglutarate transaminase BNA3 (BNA3) of Saccharomyces cerevisiae (strain ATCC 204508 / S288c) (Baker's yeast).